Consider the following 394-residue polypeptide: MKTVPFLSLLQAGILTSGIVAQNIAFVGSNANAIATVSFDTKTGTFKVTGNNTDSSTPSWQEVSRDGKLLYSIEETSTEHALTSYSIGQDGKLKKLKSIKGLAGPVSLDMHPTQPIIITANYGSASASAYSSKDNGELTHLGDFMFKMQGKGKVPDRQDAPHPHQALFDPTGKFVLMPDLGSDLIRILKVDAGQKFSVAPPNKVKPGTGPRHGVLYPASDKPRFYYVVGELSNTVTAMSVEYTVETIKLTEIQTLSTLPDGQRGAAGELILSPSGKHLYASNRLDKVFPGSSSVASYTIDQMTGKLKLLEIFNGGVENIRHMSIHPSGKWFVTEGQNSNDIKVFALDPETGKVTPEAKSTLEIEKPVCLQWWHNGAQESEAPEAGTETECEFDD.

Positions 1-21 are cleaved as a signal peptide; it reads MKTVPFLSLLQAGILTSGIVA. Residue Asn-51 is glycosylated (N-linked (GlcNAc...) asparagine).

This sequence belongs to the cycloisomerase 2 family.

The protein resides in the secreted. It carries out the reaction 6-phospho-D-glucono-1,5-lactone + H2O = 6-phospho-D-gluconate + H(+). It functions in the pathway carbohydrate degradation; pentose phosphate pathway; D-ribulose 5-phosphate from D-glucose 6-phosphate (oxidative stage): step 2/3. In terms of biological role, catalyzes the hydrolysis of 6-phosphogluconolactone to 6-phosphogluconate. This Arthroderma benhamiae (strain ATCC MYA-4681 / CBS 112371) (Trichophyton mentagrophytes) protein is Probable 6-phosphogluconolactonase ARB_02015.